Reading from the N-terminus, the 436-residue chain is Trigger factor (436 aa).

In terms of domain architecture, PPIase FKBP-type spans 163 to 248 (GDRVVLDFAG…VKEVAEGVLP (86 aa)).

The protein belongs to the FKBP-type PPIase family. Tig subfamily.

It localises to the cytoplasm. The enzyme catalyses [protein]-peptidylproline (omega=180) = [protein]-peptidylproline (omega=0). Functionally, involved in protein export. Acts as a chaperone by maintaining the newly synthesized protein in an open conformation. Functions as a peptidyl-prolyl cis-trans isomerase. In Bordetella bronchiseptica (strain ATCC BAA-588 / NCTC 13252 / RB50) (Alcaligenes bronchisepticus), this protein is Trigger factor.